Reading from the N-terminus, the 81-residue chain is ATP synthase subunit C, plastid (81 aa).

The next 2 membrane-spanning stretches (helical) occupy residues 3 to 23 (PLIP…ASIG) and 61 to 81 (EALT…NPFI).

Belongs to the ATPase C chain family. As to quaternary structure, F-type ATPases have 2 components, F(1) - the catalytic core - and F(0) - the membrane proton channel. F(1) has five subunits: alpha(3), beta(3), gamma(1), delta(1), epsilon(1). F(0) has four main subunits: a(1), b(1), b'(1) and c(10-14). The alpha and beta chains form an alternating ring which encloses part of the gamma chain. F(1) is attached to F(0) by a central stalk formed by the gamma and epsilon chains, while a peripheral stalk is formed by the delta, b and b' chains.

The protein resides in the plastid membrane. Its function is as follows. F(1)F(0) ATP synthase produces ATP from ADP in the presence of a proton or sodium gradient. F-type ATPases consist of two structural domains, F(1) containing the extramembraneous catalytic core and F(0) containing the membrane proton channel, linked together by a central stalk and a peripheral stalk. During catalysis, ATP synthesis in the catalytic domain of F(1) is coupled via a rotary mechanism of the central stalk subunits to proton translocation. In terms of biological role, key component of the F(0) channel; it plays a direct role in translocation across the membrane. A homomeric c-ring of between 10-14 subunits forms the central stalk rotor element with the F(1) delta and epsilon subunits. This Aneura mirabilis (Parasitic liverwort) protein is ATP synthase subunit C, plastid.